The sequence spans 106 residues: uncharacterized protein (106 aa).

2 disordered regions span residues 33-64 (FKTS…SRND) and 87-106 (NLTG…AVSK). A compositionally biased stretch (basic and acidic residues) spans 52–63 (DGKKQESLESRN). Over residues 87–99 (NLTGLESGGSSPP) the composition is skewed to polar residues.

Its subcellular location is the mitochondrion. This is an uncharacterized protein from Arabidopsis thaliana (Mouse-ear cress).